A 346-amino-acid polypeptide reads, in one-letter code: Dehydrogenase orf1 (346 aa).

Position 43–48 (43–48 (VDYATQ)) interacts with NADP(+). Residue 133-140 (LAFSTAIV) coordinates substrate. NADP(+) is bound by residues 170–173 (ATSV), 193–196 (SPHN), tyrosine 211, and 251–252 (LN). Position 269 to 273 (269 to 273 (APPNV)) interacts with substrate. Residue 336-337 (VS) participates in NADP(+) binding.

The protein belongs to the zinc-containing alcohol dehydrogenase family.

It functions in the pathway secondary metabolite biosynthesis. Dehydrogenase; part of the gene cluster that mediates the biosynthesis of nigerpyrone and its derivatives carbonarone A and pestalamide A. The biosynthesis pathway begins with the polyketide assembly by epaA to form phenylacetyl triketide precursor from successive condensation of two malonyl-CoA, presumably with one phenylacetyl-CoA starter unit produced by the phenylacetyl-CoA ligase epaB. For the nigerpyrone biosynthesis, the reactive polyketide chain is released as an aldehyde through the R-domain. A nonenzymatic cyclization and dehydration may create nigerpyrone. For the biosynthesis of carbonarone A and pestalamide A, an extra methyl group is added through the C-methyltransferase domain. Several further steps involving the dehydrogenase orf1, the cytochrome P450 monooxygenase orf2 and the FAD-dependent monooxygenase orf3 are required to form a carbonarone A precursor which is converted to carbonarone A via cyclization. The O-acetyltransferase epaC could catalyze the transfer of 2-methylsuccinyl-CoA, a common intermediate in the ethylmalonyl-CoA pathway, to generate the final product pestalamide A. This Aspergillus niger (strain ATCC MYA-4892 / CBS 513.88 / FGSC A1513) protein is Dehydrogenase orf1.